The chain runs to 941 residues: Isoleucine--tRNA ligase (941 aa).

The short motif at 69–79 (PYANGDIHIGH) is the 'HIGH' region element. E589 provides a ligand contact to L-isoleucyl-5'-AMP. The short motif at 630-634 (KMSKS) is the 'KMSKS' region element. K633 serves as a coordination point for ATP. Residues C915, C918, C932, and C935 each contribute to the Zn(2+) site.

This sequence belongs to the class-I aminoacyl-tRNA synthetase family. IleS type 1 subfamily. In terms of assembly, monomer. Requires Zn(2+) as cofactor.

The protein localises to the cytoplasm. The enzyme catalyses tRNA(Ile) + L-isoleucine + ATP = L-isoleucyl-tRNA(Ile) + AMP + diphosphate. Functionally, catalyzes the attachment of isoleucine to tRNA(Ile). As IleRS can inadvertently accommodate and process structurally similar amino acids such as valine, to avoid such errors it has two additional distinct tRNA(Ile)-dependent editing activities. One activity is designated as 'pretransfer' editing and involves the hydrolysis of activated Val-AMP. The other activity is designated 'posttransfer' editing and involves deacylation of mischarged Val-tRNA(Ile). This Zymomonas mobilis subsp. mobilis (strain ATCC 31821 / ZM4 / CP4) protein is Isoleucine--tRNA ligase.